Here is a 529-residue protein sequence, read N- to C-terminus: MQQRRPVRRALLSVSDKAGIVEFAQALSARGVELLSTGGTARLLAEKGLPVTEVSDYTGFPEMMDGRVKTLHPKVHGGILGRRGQDDAIMEEHQIQPIDMVVVNLYPFAQTVAREGCSLEDAVENIDIGGPTMVRSAAKNHKDVAIVVKSSDYDAIIKEMDANEGSLTLATRFDLAIKAFEHTAAYDSMIANYFGSMVPAYHGESKEAAGRFPRTLNLNFIKKQDMRYGENSHQQAAFYIEENVKEASVATATQVQGKALSYNNIADTDAALECVKEFAEPACVIVKHANPCGVAIGNSILDAYDRAYKTDPTSAFGGIIAFNRELDAETAQAIISRQFVEVIIAPSASEEALKITAAKQNVRVLTCGQWGERVPGLDFKRVNGGLLVQDRDLGMVGAEELRVVTKRQPTEQELRDALFCWKVAKFVKSNAIVYAKNNMTIGIGAGQMSRVYSAKIAGIKAADEGLEVKGSSMASDAFFPFRDGIDAAAAAGVTCVIQPGGSIRDDEVIAAADEHGIAMLFTDMRHFRH.

Positions 1–148 (MQQRRPVRRA…KNHKDVAIVV (148 aa)) constitute an MGS-like domain. Residue Lys-287 is modified to N6-acetyllysine.

Belongs to the PurH family.

It catalyses the reaction (6R)-10-formyltetrahydrofolate + 5-amino-1-(5-phospho-beta-D-ribosyl)imidazole-4-carboxamide = 5-formamido-1-(5-phospho-D-ribosyl)imidazole-4-carboxamide + (6S)-5,6,7,8-tetrahydrofolate. It carries out the reaction IMP + H2O = 5-formamido-1-(5-phospho-D-ribosyl)imidazole-4-carboxamide. Its pathway is purine metabolism; IMP biosynthesis via de novo pathway; 5-formamido-1-(5-phospho-D-ribosyl)imidazole-4-carboxamide from 5-amino-1-(5-phospho-D-ribosyl)imidazole-4-carboxamide (10-formyl THF route): step 1/1. It participates in purine metabolism; IMP biosynthesis via de novo pathway; IMP from 5-formamido-1-(5-phospho-D-ribosyl)imidazole-4-carboxamide: step 1/1. This Escherichia coli O17:K52:H18 (strain UMN026 / ExPEC) protein is Bifunctional purine biosynthesis protein PurH.